A 158-amino-acid polypeptide reads, in one-letter code: MQGRLSAWLVKHGLVHRSLGFDYQGIETLQIKPEDWHSIAVISYVYGYNYLRSQCAYDVAPGGLLASVYHLTRIQYGVDQPEEICIKVFTPRKNPRIPSVFWIWKSADFQERESYDMLGISYDNHPRLKRILMPESWIGWPLRKDYIAPNFYEIQDAH.

This sequence belongs to the complex I 30 kDa subunit family. In terms of assembly, NDH is composed of at least 16 different subunits, 5 of which are encoded in the nucleus.

The protein localises to the plastid. It is found in the chloroplast thylakoid membrane. It carries out the reaction a plastoquinone + NADH + (n+1) H(+)(in) = a plastoquinol + NAD(+) + n H(+)(out). It catalyses the reaction a plastoquinone + NADPH + (n+1) H(+)(in) = a plastoquinol + NADP(+) + n H(+)(out). Functionally, NDH shuttles electrons from NAD(P)H:plastoquinone, via FMN and iron-sulfur (Fe-S) centers, to quinones in the photosynthetic chain and possibly in a chloroplast respiratory chain. The immediate electron acceptor for the enzyme in this species is believed to be plastoquinone. Couples the redox reaction to proton translocation, and thus conserves the redox energy in a proton gradient. The polypeptide is NAD(P)H-quinone oxidoreductase subunit J, chloroplastic (Buxus microphylla (Littleleaf boxwood)).